The primary structure comprises 226 residues: Uracil-DNA glycosylase (226 aa).

Aspartate 64 (proton acceptor) is an active-site residue.

Belongs to the uracil-DNA glycosylase (UDG) superfamily. UNG family.

Its subcellular location is the cytoplasm. The catalysed reaction is Hydrolyzes single-stranded DNA or mismatched double-stranded DNA and polynucleotides, releasing free uracil.. In terms of biological role, excises uracil residues from the DNA which can arise as a result of misincorporation of dUMP residues by DNA polymerase or due to deamination of cytosine. The sequence is that of Uracil-DNA glycosylase from Fusobacterium nucleatum subsp. nucleatum (strain ATCC 25586 / DSM 15643 / BCRC 10681 / CIP 101130 / JCM 8532 / KCTC 2640 / LMG 13131 / VPI 4355).